The following is a 699-amino-acid chain: SPX domain-containing membrane protein At4g22990 (699 aa).

One can recognise an SPX domain in the interval 2-145 (VAFGKKLKER…GYRFTNYYVK (144 aa)). The next 6 helical transmembrane spans lie at 249–269 (FMSL…TYII), 280–300 (LGAA…AQLF), 317–337 (LIFS…AFDF), 339–358 (SIAV…ARAV), 377–397 (AGFV…AGLL), and 413–433 (LPGW…AISF). Residues 475–490 (IEEQGEDECDGSEEAS) are compositionally biased toward acidic residues. The tract at residues 475 to 494 (IEEQGEDECDGSEEASEDSR) is disordered. A run of 5 helical transmembrane segments spans residues 515-535 (LLIY…SSVI), 546-566 (SVAI…LVVG), 578-598 (ILLV…HVVV), 606-626 (VCSG…NLSL), and 671-691 (MLLN…IVAT).

This sequence belongs to the major facilitator superfamily.

It localises to the membrane. This Arabidopsis thaliana (Mouse-ear cress) protein is SPX domain-containing membrane protein At4g22990.